The following is a 457-amino-acid chain: Siroheme synthase (457 aa).

Residues 1 to 204 form a precorrin-2 dehydrogenase /sirohydrochlorin ferrochelatase region; the sequence is MDHLPIFCQL…ADEKAVNATT (204 aa). NAD(+)-binding positions include 22–23 and 43–44; these read DV and LT. At serine 128 the chain carries Phosphoserine. The uroporphyrinogen-III C-methyltransferase stretch occupies residues 216-457; it reads GEVVLVGAGP…RDKLNWFSNY (242 aa). Proline 225 provides a ligand contact to S-adenosyl-L-methionine. Residue aspartate 248 is the Proton acceptor of the active site. Lysine 270 acts as the Proton donor in catalysis. Residues 301–303, isoleucine 306, 331–332, methionine 382, and glycine 411 contribute to the S-adenosyl-L-methionine site; these read GGD and TA.

The protein in the N-terminal section; belongs to the precorrin-2 dehydrogenase / sirohydrochlorin ferrochelatase family. This sequence in the C-terminal section; belongs to the precorrin methyltransferase family.

It carries out the reaction uroporphyrinogen III + 2 S-adenosyl-L-methionine = precorrin-2 + 2 S-adenosyl-L-homocysteine + H(+). The enzyme catalyses precorrin-2 + NAD(+) = sirohydrochlorin + NADH + 2 H(+). It catalyses the reaction siroheme + 2 H(+) = sirohydrochlorin + Fe(2+). The protein operates within cofactor biosynthesis; adenosylcobalamin biosynthesis; precorrin-2 from uroporphyrinogen III: step 1/1. It participates in cofactor biosynthesis; adenosylcobalamin biosynthesis; sirohydrochlorin from precorrin-2: step 1/1. Its pathway is porphyrin-containing compound metabolism; siroheme biosynthesis; precorrin-2 from uroporphyrinogen III: step 1/1. It functions in the pathway porphyrin-containing compound metabolism; siroheme biosynthesis; siroheme from sirohydrochlorin: step 1/1. The protein operates within porphyrin-containing compound metabolism; siroheme biosynthesis; sirohydrochlorin from precorrin-2: step 1/1. Its function is as follows. Multifunctional enzyme that catalyzes the SAM-dependent methylations of uroporphyrinogen III at position C-2 and C-7 to form precorrin-2 via precorrin-1. Then it catalyzes the NAD-dependent ring dehydrogenation of precorrin-2 to yield sirohydrochlorin. Finally, it catalyzes the ferrochelation of sirohydrochlorin to yield siroheme. The sequence is that of Siroheme synthase from Salmonella choleraesuis (strain SC-B67).